The chain runs to 108 residues: Small cysteine and glycine repeat-containing protein 8 (108 aa).

The interval 4–84 (CGCGGCGGGC…RRTCSSCGCG (81 aa)) is 12 X 2 AA repeats of CG.

This sequence belongs to the KRTAP type 28 family.

Functionally, in the hair cortex, hair keratin intermediate filaments are embedded in an interfilamentous matrix, consisting of hair keratin-associated proteins (KRTAP), which are essential for the formation of a rigid and resistant hair shaft through their extensive disulfide bond cross-linking with abundant cysteine residues of hair keratins. The matrix proteins include the high-sulfur and high-glycine-tyrosine keratins. This is Small cysteine and glycine repeat-containing protein 8 from Homo sapiens (Human).